Consider the following 116-residue polypeptide: Putative pterin-4-alpha-carbinolamine dehydratase (116 aa).

It belongs to the pterin-4-alpha-carbinolamine dehydratase family.

The catalysed reaction is (4aS,6R)-4a-hydroxy-L-erythro-5,6,7,8-tetrahydrobiopterin = (6R)-L-erythro-6,7-dihydrobiopterin + H2O. The chain is Putative pterin-4-alpha-carbinolamine dehydratase from Stenotrophomonas maltophilia (strain K279a).